The primary structure comprises 285 residues: Sulfotransferase 2A2 (285 aa).

6 residues coordinate 3'-phosphoadenylyl sulfate: Lys-44, Ser-45, Gly-46, Thr-47, Asn-48, and Trp-49. Catalysis depends on His-99, which acts as the Proton acceptor. Residues Arg-121, Ser-129, Tyr-184, Ser-218, Arg-247, Lys-248, and Gly-249 each coordinate 3'-phosphoadenylyl sulfate.

This sequence belongs to the sulfotransferase 1 family. Detected in liver.

The protein resides in the cytoplasm. It catalyses the reaction an alcohol + 3'-phosphoadenylyl sulfate = an alkyl sulfate + adenosine 3',5'-bisphosphate + H(+). Sulfotransferase that utilizes 3'-phospho-5'-adenylyl sulfate (PAPS) as sulfonate donor to catalyze the sulfate conjugation of a potential wide variety of acceptor molecules bearing a hydroxyl group. Sulfonation increases the water solubility of most compounds, and therefore their renal excretion, but it can also result in bioactivation to form active metabolites. The polypeptide is Sulfotransferase 2A2 (Rattus norvegicus (Rat)).